Reading from the N-terminus, the 441-residue chain is Putative cytochrome P450 138 (441 aa).

Cysteine 388 contacts heme.

The protein belongs to the cytochrome P450 family. The cofactor is heme.

The protein is Putative cytochrome P450 138 (cyp138) of Mycobacterium bovis (strain ATCC BAA-935 / AF2122/97).